A 1283-amino-acid chain; its full sequence is uncharacterized protein (1283 aa).

Residues 10–46 enclose the LDL-receptor class A domain; the sequence is ACPPNTFTCADGSCIPSDWKGDGEKDCEDGSDEEAVT. 2 cysteine pairs are disulfide-bonded: C11-C23 and C18-C36. The segment at 27 to 47 is disordered; sequence DWKGDGEKDCEDGSDEEAVTG. Acidic residues predominate over residues 34–45; sequence KDCEDGSDEEAV. N-linked (GlcNAc...) asparagine glycosylation occurs at N79. Residues 236-278 are disordered; sequence STTLIVDETTESTSASAEDDDDDVLTTNTSEESTATTAHDEEV. Residues 261–272 show a composition bias toward low complexity; it reads TTNTSEESTATT. A coiled-coil region spans residues 332-389; sequence YQKTLEKEKCAIRNATSKCEALISYNNNLDCAIVTMNDECEVDAQNLVVELQEEVNDL. Disordered stretches follow at residues 621–651 and 1005–1046; these read ARPT…VASS and SSST…PTDG. A compositionally biased stretch (pro residues) spans 626–647; that stretch reads VTMPPRAPTAKPLPIPSAPTPP. Positions 1005 to 1015 are enriched in low complexity; the sequence is SSSTMVSTSSE. The segment covering 1016–1026 has biased composition (acidic residues); it reads SDSESAPEQET. Residues 1027–1044 show a composition bias toward low complexity; sequence EPTVPSTTETTESPSTPT. A helical transmembrane segment spans residues 1263 to 1283; the sequence is VQSSVSFHIILAALIPFFALF.

It is found in the membrane. This is an uncharacterized protein from Caenorhabditis elegans.